A 502-amino-acid chain; its full sequence is RNA polymerase sigma factor sigA (502 aa).

The transit peptide at 1–23 (MATAAVIGLNTGKRLLSSSFYHS) directs the protein to the chloroplast. Over residues 57–71 (YSPSFPSSNRHTQSA) the composition is skewed to polar residues. Positions 57–92 (YSPSFPSSNRHTQSAKALKESVDVASTEKPWLPNGT) are disordered. Threonine 170 is subject to Phosphothreonine. A Polymerase core binding motif is present at residues 287–300 (DLVQGGLIGLLRGI). Residues 461 to 480 (WEDISKRIGLSRERVRQVGL) constitute a DNA-binding region (H-T-H motif).

Belongs to the sigma-70 factor family. As to quaternary structure, interacts with SIB1 in chloroplast. Binds to CSK. In terms of processing, the phosphorylation of Thr-170 mediated by oxidative conditions of plastoquinone (PQ) changes the promoter specificity, selectively inhibiting the transcription of the psaA gene, which encodes a PS-I protein. Phosphorylation of the holoenzyme occurs in the dark. This phosphorylation in response to plastoquinone redox state modification is mediated by CSK. Highly expressed in leaves, and to a lesser extent in roots. Expressed in old seedlings (8 days), cotyledons, hypocotyls, leaves, sepals and siliques.

Its subcellular location is the plastid. It is found in the chloroplast. Its function is as follows. Essential protein. Sigma factors are initiation factors that promote the attachment of plastid-encoded RNA polymerase (PEP) to specific initiation sites and are then released. Controls the transcription of the psaA gene and thus modulates photosystem stoichiometry. Thereby maintains a harmonious electron flow and photosynthetic efficiency. The polypeptide is RNA polymerase sigma factor sigA (SIGA) (Arabidopsis thaliana (Mouse-ear cress)).